We begin with the raw amino-acid sequence, 293 residues long: Acetylglutamate kinase (293 aa).

Substrate-binding positions include 70-71 (GG), R92, and N186.

Belongs to the acetylglutamate kinase family. ArgB subfamily.

The protein resides in the cytoplasm. The enzyme catalyses N-acetyl-L-glutamate + ATP = N-acetyl-L-glutamyl 5-phosphate + ADP. It participates in amino-acid biosynthesis; L-arginine biosynthesis; N(2)-acetyl-L-ornithine from L-glutamate: step 2/4. Functionally, catalyzes the ATP-dependent phosphorylation of N-acetyl-L-glutamate. The protein is Acetylglutamate kinase of Parasynechococcus marenigrum (strain WH8102).